The primary structure comprises 540 residues: Cytochrome P450 monooxygenase ORF5 (540 aa).

The helical transmembrane segment at 48 to 68 threads the bilayer; it reads YHALGTAIALFACACAYALVA. Residues Asn376 and Asn460 are each glycosylated (N-linked (GlcNAc...) asparagine). Cys483 lines the heme pocket.

This sequence belongs to the cytochrome P450 family. Requires heme as cofactor.

Its subcellular location is the membrane. It participates in sesquiterpene biosynthesis. Its function is as follows. Cytochrome P450 monooxygenase; part of the gene cluster that mediates the biosynthesis of PR-toxin, a bicyclic sesquiterpene belonging to the eremophilane class and acting as a mycotoxin. The first step of the pathway is catalyzed by the aristolochene synthase which performs the cyclization of trans,trans-farnesyl diphosphate (FPP) to the bicyclic sesquiterpene aristolochene. Following the formation of aristolochene, the non-oxygenated aristolochene is converted to the trioxygenated intermediate eremofortin B, via 7-epi-neopetasone. This conversion appears to involve three enzymes, a hydroxysterol oxidase-like enzyme, the quinone-oxidase prx3 that forms the quinone-type-structure in the bicyclic nucleus of aristolochene with the C8-oxo group and the C-3 hydroxyl group, and the P450 monooxygenase ORF6 that introduces the epoxide at the double bond between carbons 1 and 2. No monoxy or dioxy-intermediates have been reported to be released to the broth, so these three early oxidative reactions may be coupled together. Eremofortin B is further oxidized by another P450 monooxygenase, that introduces a second epoxide between carbons 7 and 11 prior to acetylation to eremofortin A by the acetyltransferase ORF8. The second epoxidation may be performed by a second P450 monooxygenase. After the acetylation step, eremofortin A is converted to eremofortin C and then to PR-toxin. First the conversion of eremofortin A to eremofortin C proceeds by oxidation of the side chain of the molecule at C-12 and is catalyzed by the short-chain oxidoreductase prx1. The cytochrome P450 monooxygenase ORF6 is probably also involved in this step. The primary alcohol formed at C-12 is finally oxidized by the short-chain alcohol dehydrogenase prx4 that forms PR-toxin. In Penicillium roqueforti (strain FM164), this protein is Cytochrome P450 monooxygenase ORF5.